The chain runs to 215 residues: UPF0502 protein PputGB1_3531 (215 aa).

It belongs to the UPF0502 family.

This chain is UPF0502 protein PputGB1_3531, found in Pseudomonas putida (strain GB-1).